Here is a 151-residue protein sequence, read N- to C-terminus: Neuroglobin (151 aa).

Positions 1–149 (MERPEPELIR…VVQAMSRGWD (149 aa)) constitute a Globin domain. His64 and His96 together coordinate heme b.

The protein belongs to the globin family. Monomer. Homodimer and homotetramer; disulfide-linked. Mainly monomeric but also detected as part of homodimers and homotetramers. Interacts with 14-3-3 proteins; regulates the phosphorylation of NGB. Could interact (ferrous form) with G-alpha(i) proteins (GTP-bound form). Post-translationally, phosphorylated during hypoxia by ERK1/ERK2. Phosphorylation regulates the heme pocket hexacoordination preventing the association of His-64 with the heme metal center. Thereby, promotes the access of dioxygen and nitrite to the heme and stimulates the nitrite reductase activity. Phosphorylation during hypoxia is stabilized by 14-3-3 proteins.

Its subcellular location is the cytoplasm. It is found in the cytosol. It localises to the mitochondrion matrix. The catalysed reaction is Fe(III)-heme b-[protein] + nitric oxide + H2O = Fe(II)-heme b-[protein] + nitrite + 2 H(+). In terms of biological role, monomeric globin with a bis-histidyl six-coordinate heme-iron atom through which it can bind dioxygen, carbon monoxide and nitric oxide. Could help transport oxygen and increase its availability to the metabolically active neuronal tissues, though its low quantity in tissues as well as its high affinity for dioxygen, which may limit its oxygen-releasing ability, argue against it. The ferrous/deoxygenated form exhibits a nitrite reductase activity and it could produce nitric oxide which in turn inhibits cellular respiration in response to hypoxia. In its ferrous/deoxygenated state, it may also exhibit GDI (Guanine nucleotide Dissociation Inhibitor) activity toward heterotrimeric G-alpha proteins, thereby regulating signal transduction to facilitate neuroprotective responses in the wake of hypoxia and associated oxidative stress. The protein is Neuroglobin of Canis lupus familiaris (Dog).